We begin with the raw amino-acid sequence, 462 residues long: GTPase HflX (462 aa).

The Hflx-type G domain occupies 255 to 452 (PAVGIVGYTN…LLEEKIYNLP (198 aa)). Residues 261 to 268 (GYTNAGKS), 286 to 290 (FATLD), 308 to 311 (DTVG), 374 to 377 (NKID), and 430 to 432 (SAY) contribute to the GTP site. Ser268 and Thr288 together coordinate Mg(2+).

This sequence belongs to the TRAFAC class OBG-HflX-like GTPase superfamily. HflX GTPase family. As to quaternary structure, monomer. Associates with the 50S ribosomal subunit. The cofactor is Mg(2+).

The protein resides in the cytoplasm. In terms of biological role, GTPase that associates with the 50S ribosomal subunit and may have a role during protein synthesis or ribosome biogenesis. The polypeptide is GTPase HflX (Leptospira borgpetersenii serovar Hardjo-bovis (strain JB197)).